The following is a 385-amino-acid chain: Calcium/calmodulin-dependent protein kinase type 1D (385 aa).

Positions phenylalanine 23 to isoleucine 279 constitute a Protein kinase domain. Residues leucine 29–valine 37 and lysine 52 contribute to the ATP site. Residue lysine 113 forms a Glycyl lysine isopeptide (Lys-Gly) (interchain with G-Cter in SUMO2) linkage. At serine 122 the chain carries Phosphoserine. Aspartate 144 acts as the Proton acceptor in catalysis. Position 180 is a phosphothreonine; by CaMKK1 and CaMKK2 (threonine 180). The tract at residues isoleucine 279–methionine 319 is autoinhibitory domain. The tract at residues lysine 299–arginine 320 is calmodulin-binding. Positions histidine 318–leucine 324 match the Nuclear export signal motif. The interval serine 360–lysine 385 is disordered. The span at threonine 375–lysine 385 shows a compositional bias: polar residues.

It belongs to the protein kinase superfamily. CAMK Ser/Thr protein kinase family. CaMK subfamily. Widely expressed. Highly and mostly expressed in polymorphonuclear leukocytes (neutrophilic and eosinophilic granulocytes) while little or no expression is observed in monocytes and lymphocytes.

The protein localises to the cytoplasm. It is found in the nucleus. The enzyme catalyses L-seryl-[protein] + ATP = O-phospho-L-seryl-[protein] + ADP + H(+). It carries out the reaction L-threonyl-[protein] + ATP = O-phospho-L-threonyl-[protein] + ADP + H(+). With respect to regulation, activated by Ca(2+)/calmodulin. Binding of calmodulin results in conformational change that relieves intrasteric autoinhibition and allows phosphorylation of Thr-180 within the activation loop by CaMKK1 or CaMKK2. Phosphorylation of Thr-180 results in several fold increase in total activity. Unlike CaMK4, may be unable to exhibit autonomous activity after Ca(2+)/calmodulin activation. Calcium/calmodulin-dependent protein kinase that operates in the calcium-triggered CaMKK-CaMK1 signaling cascade and, upon calcium influx, activates CREB-dependent gene transcription, regulates calcium-mediated granulocyte function and respiratory burst and promotes basal dendritic growth of hippocampal neurons. In neutrophil cells, required for cytokine-induced proliferative responses and activation of the respiratory burst. Activates the transcription factor CREB1 in hippocampal neuron nuclei. May play a role in apoptosis of erythroleukemia cells. In vitro, phosphorylates transcription factor CREM isoform Beta. This chain is Calcium/calmodulin-dependent protein kinase type 1D (CAMK1D), found in Homo sapiens (Human).